The chain runs to 296 residues: uncharacterized protein (296 aa).

The next 6 helical transmembrane spans lie at 10–29, 36–58, 112–131, 188–210, 241–260, and 273–295; these read FSTLIILGITLGIDLIFSLL, YIVLRILEIFIVFFNIYQLYYIL, FFALGTFSVNDIGIVNMFVT, ILIFLISIVILMVTIIPFILYLR, MMYGAYNMIIFFCIYYSAYF, and MYISFLVAFIFLIFQFKIYVTYI.

The protein localises to the cell membrane. This is an uncharacterized protein from Clostridium acetobutylicum (strain ATCC 824 / DSM 792 / JCM 1419 / IAM 19013 / LMG 5710 / NBRC 13948 / NRRL B-527 / VKM B-1787 / 2291 / W).